A 1178-amino-acid chain; its full sequence is Pyruvate carboxylase, mitochondrial (1178 aa).

The transit peptide at 1 to 20 directs the protein to the mitochondrion; it reads MLKFQTVRGGLRLLGVRRSS. Ser-21 is modified (phosphoserine). 2 positions are modified to N6-acetyllysine: Lys-35 and Lys-39. In terms of domain architecture, Biotin carboxylation spans 36–486; the sequence is PIKKVMVANR…DTQFIDENPE (451 aa). At Lys-79 the chain carries N6-acetyllysine; alternate. Lys-79 carries the post-translational modification N6-succinyllysine; alternate. N6-acetyllysine occurs at positions 148 and 152. Lys-152 and Glu-236 together coordinate ATP. One can recognise an ATP-grasp domain in the interval 156 to 353; the sequence is RAIAIAAGVP…LVHAQIHVSE (198 aa). Lys-241 is subject to N6-acetyllysine. Position 271 (His-271) interacts with ATP. N6-acetyllysine is present on residues Lys-297, Lys-316, and Lys-319. Arg-328 is a catalytic residue. At Lys-434 the chain carries N6-acetyllysine. Position 442 is an N6-succinyllysine (Lys-442). One can recognise a Pyruvate carboxyltransferase domain in the interval 563 to 832; sequence LLLMDTTFRD…DTEVPLERVF (270 aa). Residue 571–575 coordinates substrate; the sequence is RDAHQ. A Mn(2+)-binding site is contributed by Asp-572. An N6-acetyllysine modification is found at Lys-589. Arg-644 lines the substrate pocket. Lys-661 and Lys-717 each carry N6-acetyllysine. Lys-741 contacts Mn(2+). Lys-741 bears the N6-carboxylysine mark. N6-acetyllysine is present on Lys-748. Mn(2+) is bound by residues His-771 and His-773. Lys-892 bears the N6-acetyllysine mark. Thr-908 contacts substrate. N6-acetyllysine is present on Lys-969. At Lys-988 the chain carries N6-acetyllysine; alternate. N6-succinyllysine; alternate is present on Lys-988. Position 992 is an N6-acetyllysine (Lys-992). The residue at position 1003 (Thr-1003) is a Phosphothreonine. 3 positions are modified to N6-acetyllysine: Lys-1061, Lys-1090, and Lys-1124. Positions 1109-1178 constitute a Biotinyl-binding domain; sequence KGQIGAPMPG…EGDDLILEIE (70 aa). N6-biotinyllysine is present on Lys-1144.

As to quaternary structure, homotetramer. Interacts (via the biotin carboxylation domain) with SIRT4. The cofactor is biotin. Mn(2+) serves as cofactor. Post-translationally, acetylation of Lys-316 is observed in liver mitochondria from fasted mice but not from fed mice. Acetylation of Lys-748 might play a role in catalytic activity regulation. In terms of tissue distribution, liver, kidney, adipose tissue, liver and brain.

It localises to the mitochondrion matrix. The enzyme catalyses hydrogencarbonate + pyruvate + ATP = oxaloacetate + ADP + phosphate + H(+). It functions in the pathway carbohydrate biosynthesis; gluconeogenesis. Functionally, pyruvate carboxylase catalyzes a 2-step reaction, involving the ATP-dependent carboxylation of the covalently attached biotin in the first step and the transfer of the carboxyl group to pyruvate in the second. Catalyzes in a tissue specific manner, the initial reactions of glucose (liver, kidney) and lipid (adipose tissue, liver, brain) synthesis from pyruvate. This Mus musculus (Mouse) protein is Pyruvate carboxylase, mitochondrial (Pc).